A 353-amino-acid chain; its full sequence is Endophilin-A1 (353 aa).

A membrane-binding amphipathic helix region spans residues 1–21 (MSVAGLKKQFHKATQKVSEKV). Residues 1 to 27 (MSVAGLKKQFHKATQKVSEKVGGAEGT) form a disordered region. A binds and tubulates liposomes region spans residues 1–125 (MSVAGLKKQF…DVGEAMKELS (125 aa)). A BAR domain is found at 18–249 (SEKVGGAEGT…LEDRIKEASS (232 aa)). The interval 60–87 (PNPASRAKLSMINTMSKIRGQEKGPGYP) is required for dimerization upon membrane association. The stretch at 181–201 (EELRQALEKFDESKEIAESSM) forms a coiled coil. Positions 243–257 (RIKEASSQPKREYQP) are enriched in basic and acidic residues. The segment at 243–290 (RIKEASSQPKREYQPKPRMSLDFTSGGDNTQHNGGISHATTPKPAGAH) is disordered. The segment covering 264–282 (DFTSGGDNTQHNGGISHAT) has biased composition (polar residues). Positions 291-350 (MDQPCCRALYDFEPENEGELGFKEGDIITLTNQIDENWYEGMLHGQSGFFPINYVDILVP) constitute an SH3 domain.

This sequence belongs to the endophilin family. As to quaternary structure, monomer; in cytoplasm. Homodimer; when associated with membranes. Associates with MAP4K3. This interaction appears to regulate MAP4K3-mediated JNK activation. Interacts with SYNJ1 and DNM1. As to expression, highly expressed in brain.

The protein resides in the cytoplasm. Its subcellular location is the membrane. It localises to the early endosome. The protein localises to the presynapse. Functionally, implicated in synaptic vesicle endocytosis. May recruit other proteins to membranes with high curvature. In Gallus gallus (Chicken), this protein is Endophilin-A1.